A 393-amino-acid chain; its full sequence is S-adenosylmethionine synthase 2 (393 aa).

Glu-9 contributes to the Mg(2+) binding site. His-15 contacts ATP. K(+) is bound at residue Glu-43. L-methionine is bound by residues Glu-56 and Gln-99. ATP-binding positions include 167-169, 235-238, Asp-246, 252-253, Ala-269, Lys-273, and Lys-277; these read DGK, SGRF, and RK. Position 246 (Asp-246) interacts with L-methionine. Lys-277 is an L-methionine binding site.

This sequence belongs to the AdoMet synthase family. In terms of assembly, homotetramer. Mn(2+) serves as cofactor. It depends on Mg(2+) as a cofactor. Co(2+) is required as a cofactor. Requires K(+) as cofactor. Mostly expressed in roots. Also present in stems and leaves.

The protein localises to the cytoplasm. The enzyme catalyses L-methionine + ATP + H2O = S-adenosyl-L-methionine + phosphate + diphosphate. The protein operates within amino-acid biosynthesis; S-adenosyl-L-methionine biosynthesis; S-adenosyl-L-methionine from L-methionine: step 1/1. Functionally, catalyzes the formation of S-adenosylmethionine from methionine and ATP. The reaction comprises two steps that are both catalyzed by the same enzyme: formation of S-adenosylmethionine (AdoMet) and triphosphate, and subsequent hydrolysis of the triphosphate. This Solanum lycopersicum (Tomato) protein is S-adenosylmethionine synthase 2 (SAM2).